Consider the following 637-residue polypeptide: Rab11 family-interacting protein 4 (637 aa).

The region spanning 49 to 84 (GQGEEVEKLVKYLDPNDLGRINFKDFCRGVFAMKGC) is the EF-hand domain. The Ca(2+) site is built by D62, N64, R68, and D73. The necessary for interaction with RAB11A, subcellular location, homo- or heterooligomerization stretch occupies residues 82-637 (KGCEELLKDV…HNPSILEIKH (556 aa)). Disordered stretches follow at residues 138–175 (EEEA…PAEK) and 219–256 (YGEG…SAGQ). A coiled-coil region spans residues 280–617 (KINLLNDLEA…EEINFRLRQY (338 aa)). The 63-residue stretch at 574–636 (EAKNLFAAQT…DHNPSILEIK (63 aa)) folds into the FIP-RBD domain.

Homodimer. Forms a complex with Rab11 (RAB11A or RAB11B) and ARF6. Interacts with RAB11A; the interaction is direct. Forms a heterooligomeric complex with RAB11FIP2, RAB11FIP3 and RAB11FIP5. Interacts with ECPAS. In terms of assembly, (Microbial infection) Interacts with human cytomegalovirus/HHV-5 protein gM/UL100. Present at high level in testis (at protein level). Weakly expressed in other tissues.

The protein localises to the endosome. It localises to the cytoplasm. The protein resides in the cytoskeleton. Its subcellular location is the spindle. It is found in the microtubule organizing center. The protein localises to the centrosome. It localises to the recycling endosome membrane. The protein resides in the cleavage furrow. Its subcellular location is the midbody. It is found in the cytoplasmic vesicle. Its function is as follows. Acts as a regulator of endocytic traffic by participating in membrane delivery. Required for the abscission step in cytokinesis, possibly by acting as an 'address tag' delivering recycling endosome membranes to the cleavage furrow during late cytokinesis. In case of infection by HCMV (human cytomegalovirus), may participate in egress of the virus out of nucleus; this function is independent of ARF6. The chain is Rab11 family-interacting protein 4 (RAB11FIP4) from Homo sapiens (Human).